The chain runs to 138 residues: MSLELYNTTKRVIPEEKLERVIRHVIEAEGFVPDVVVAVFCGDRLIQRINREHLGHDYATDTITFRYNSGREIEGEFYVSLDVIDKNSRRFKTGFENELFRVAIHSALHLAGYDDSGDEARAGMKKREDRYLSQLPSL.

The Zn(2+) site is built by H105, H109, and D115.

Belongs to the endoribonuclease YbeY family. Zn(2+) is required as a cofactor.

Its subcellular location is the cytoplasm. Single strand-specific metallo-endoribonuclease involved in late-stage 70S ribosome quality control and in maturation of the 3' terminus of the 16S rRNA. The protein is Endoribonuclease YbeY of Chlorobium phaeobacteroides (strain BS1).